Here is a 90-residue protein sequence, read N- to C-terminus: Probable Fe(2+)-trafficking protein (90 aa).

This sequence belongs to the Fe(2+)-trafficking protein family.

Could be a mediator in iron transactions between iron acquisition and iron-requiring processes, such as synthesis and/or repair of Fe-S clusters in biosynthetic enzymes. This chain is Probable Fe(2+)-trafficking protein, found in Vibrio campbellii (strain ATCC BAA-1116).